Reading from the N-terminus, the 339-residue chain is Putative methylthioribose-1-phosphate isomerase (339 aa).

Substrate contacts are provided by residues 43–45, arginine 86, and glutamine 191; that span reads RGA. Aspartate 232 acts as the Proton donor in catalysis. Position 241-242 (241-242) interacts with substrate; it reads NK.

The protein belongs to the eIF-2B alpha/beta/delta subunits family. MtnA subfamily.

The enzyme catalyses 5-(methylsulfanyl)-alpha-D-ribose 1-phosphate = 5-(methylsulfanyl)-D-ribulose 1-phosphate. Catalyzes the interconversion of methylthioribose-1-phosphate (MTR-1-P) into methylthioribulose-1-phosphate (MTRu-1-P). The polypeptide is Putative methylthioribose-1-phosphate isomerase (Archaeoglobus fulgidus (strain ATCC 49558 / DSM 4304 / JCM 9628 / NBRC 100126 / VC-16)).